The primary structure comprises 338 residues: MSTLRLLISDSYDPWFNLAVEECIFRQMPATQRVLFLWRNADTVVIGRAQNPWKECNTRRMEEDNVRLARRSSGGGAVFHDLGNTCFTFMAGKPEYDKTISTSIVLNALNALGVSAEASGRNDLVVKTVEGDRKVSGSAYRETKDRGFHHGTLLLNADLSRLANYLNPDKKKLAAKGITSVRSRVTNLTELLPGITHEQVCEAITKAFFAHYGERVEAEIISPDKTPDLPNFAETFARQSSWEWNFGQAPAFSHLLDERFSWGGVELHFDVEKGHITRAQVFTDSLNPAPLEALAGRLQGCLYRADMLQQECEALLVDFPDQEKELRELSTWIAGAVR.

The region spanning 29–216 (PATQRVLFLW…AFFAHYGERV (188 aa)) is the BPL/LPL catalytic domain. ATP-binding positions include Arg71, 76–79 (GAVF), and Lys134. Position 134 (Lys134) interacts with (R)-lipoate.

This sequence belongs to the LplA family. As to quaternary structure, monomer.

The protein resides in the cytoplasm. The enzyme catalyses L-lysyl-[lipoyl-carrier protein] + (R)-lipoate + ATP = N(6)-[(R)-lipoyl]-L-lysyl-[lipoyl-carrier protein] + AMP + diphosphate + H(+). It participates in protein modification; protein lipoylation via exogenous pathway; protein N(6)-(lipoyl)lysine from lipoate: step 1/2. The protein operates within protein modification; protein lipoylation via exogenous pathway; protein N(6)-(lipoyl)lysine from lipoate: step 2/2. Functionally, catalyzes both the ATP-dependent activation of exogenously supplied lipoate to lipoyl-AMP and the transfer of the activated lipoyl onto the lipoyl domains of lipoate-dependent enzymes. The sequence is that of Lipoate-protein ligase A from Shigella sonnei (strain Ss046).